The chain runs to 249 residues: Eukaryotic translation initiation factor 3 subunit J-A (249 aa).

A compositionally biased stretch (acidic residues) spans 1–15 (MADADSWDADSFEPE). A disordered region spans residues 1-104 (MADADSWDAD…DTPLTPEDEL (104 aa)). Basic and acidic residues predominate over residues 16 to 27 (EPIKKAAVHDKW). Over residues 28-52 (EGEDEDDDVKDNWDDDEEEEKEEEE) the composition is skewed to acidic residues. Residues 34–96 (DDVKDNWDDD…QQLEETKRDT (63 aa)) adopt a coiled-coil conformation. The span at 53–96 (EKKTEAKPTEKKKLSEKIKEKENLQRKKQEELRKQQLEETKRDT) shows a compositional bias: basic and acidic residues.

Belongs to the eIF-3 subunit J family. Component of the eukaryotic translation initiation factor 3 (eIF-3) complex, which is composed of 13 subunits: eif3a, eif3b, eif3c, eif3d, eif3e, eif3f, eif3g, eif3h, eif3i, eif3j, eif3k, eif3l and eif3m.

The protein resides in the cytoplasm. Its function is as follows. Component of the eukaryotic translation initiation factor 3 (eIF-3) complex, which is involved in protein synthesis of a specialized repertoire of mRNAs and, together with other initiation factors, stimulates binding of mRNA and methionyl-tRNAi to the 40S ribosome. The eIF-3 complex specifically targets and initiates translation of a subset of mRNAs involved in cell proliferation. The sequence is that of Eukaryotic translation initiation factor 3 subunit J-A (eif3ja) from Danio rerio (Zebrafish).